The following is a 344-amino-acid chain: uncharacterized protein (344 aa).

It belongs to the glycosyltransferase 2 family.

Its function is as follows. May be involved in the production of the exopolysaccharide (EPS) component of the extracellular matrix during biofilm formation. EPS is responsible for the adhesion of chains of cells into bundles. This is an uncharacterized protein from Bacillus subtilis (strain 168).